Here is an 853-residue protein sequence, read N- to C-terminus: Eukaryotic translation initiation factor 3 subunit C (853 aa).

Residues 1 to 78 (MSRFFAASDS…EDEDQNKVLK (78 aa)) form a disordered region. Acidic residues predominate over residues 11–46 (SSEESSEEELYSDNEASAQEDSDKDSDDDDSDDDDS). One can recognise a PCI domain in the interval 599–773 (FHMHINLELL…SAIIFRKGVE (175 aa)). The tract at residues 798–853 (TLEQRTQGTANAFERQGGRGGRGGGRGRGGGRGGGVPRGGRNQQFTGGALGRAIQA) is disordered. The span at 815–835 (GRGGRGGGRGRGGGRGGGVPR) shows a compositional bias: gly residues.

It belongs to the eIF-3 subunit C family. As to quaternary structure, component of the eukaryotic translation initiation factor 3 (eIF-3) complex.

It localises to the cytoplasm. In terms of biological role, component of the eukaryotic translation initiation factor 3 (eIF-3) complex, which is involved in protein synthesis of a specialized repertoire of mRNAs and, together with other initiation factors, stimulates binding of mRNA and methionyl-tRNAi to the 40S ribosome. The eIF-3 complex specifically targets and initiates translation of a subset of mRNAs involved in cell proliferation. This is Eukaryotic translation initiation factor 3 subunit C from Phaeosphaeria nodorum (strain SN15 / ATCC MYA-4574 / FGSC 10173) (Glume blotch fungus).